Here is a 1057-residue protein sequence, read N- to C-terminus: Carbamoyl phosphate synthase large chain (1057 aa).

Residues 1-401 (MPKRNDIKTI…SLLKAIRSLE (401 aa)) form a carboxyphosphate synthetic domain region. ATP is bound by residues R129, R169, G175, G176, K208, I210, E215, G241, I242, H243, Q284, and E298. Positions 133 to 327 (RTLMNYLNVP…IAKLAAKIAV (195 aa)) constitute an ATP-grasp 1 domain. The Mg(2+) site is built by Q284, E298, and N300. 3 residues coordinate Mn(2+): Q284, E298, and N300. Positions 402–546 (YGVHHLGLPN…YGTYETENES (145 aa)) are oligomerization domain. Residues 547–929 (IITDKEKILV…ALFKGLTGSG (383 aa)) are carbamoyl phosphate synthetic domain. The ATP-grasp 2 domain maps to 671 to 861 (EALLRKINVP…MAQLAMRAII (191 aa)). Residues R707, R746, L748, E752, G777, V778, H779, S780, Q820, and E832 each contribute to the ATP site. Mg(2+) contacts are provided by Q820, E832, and N834. Residues Q820, E832, and N834 each contribute to the Mn(2+) site. Residues 930–1057 (VEVKDHGTVL…ESMTFTMRQM (128 aa)) form the MGS-like domain. The tract at residues 930-1057 (VEVKDHGTVL…ESMTFTMRQM (128 aa)) is allosteric domain.

This sequence belongs to the CarB family. Composed of two chains; the small (or glutamine) chain promotes the hydrolysis of glutamine to ammonia, which is used by the large (or ammonia) chain to synthesize carbamoyl phosphate. Tetramer of heterodimers (alpha,beta)4. Mg(2+) serves as cofactor. Requires Mn(2+) as cofactor.

The catalysed reaction is hydrogencarbonate + L-glutamine + 2 ATP + H2O = carbamoyl phosphate + L-glutamate + 2 ADP + phosphate + 2 H(+). The enzyme catalyses hydrogencarbonate + NH4(+) + 2 ATP = carbamoyl phosphate + 2 ADP + phosphate + 2 H(+). It functions in the pathway amino-acid biosynthesis; L-arginine biosynthesis; carbamoyl phosphate from bicarbonate: step 1/1. Its pathway is pyrimidine metabolism; UMP biosynthesis via de novo pathway; (S)-dihydroorotate from bicarbonate: step 1/3. Large subunit of the glutamine-dependent carbamoyl phosphate synthetase (CPSase). CPSase catalyzes the formation of carbamoyl phosphate from the ammonia moiety of glutamine, carbonate, and phosphate donated by ATP, constituting the first step of 2 biosynthetic pathways, one leading to arginine and/or urea and the other to pyrimidine nucleotides. The large subunit (synthetase) binds the substrates ammonia (free or transferred from glutamine from the small subunit), hydrogencarbonate and ATP and carries out an ATP-coupled ligase reaction, activating hydrogencarbonate by forming carboxy phosphate which reacts with ammonia to form carbamoyl phosphate. The sequence is that of Carbamoyl phosphate synthase large chain from Staphylococcus aureus (strain bovine RF122 / ET3-1).